Consider the following 138-residue polypeptide: Large-conductance mechanosensitive channel (138 aa).

3 consecutive transmembrane segments (helical) span residues 19 to 39 (VGVIIGAAFGAIVSSLVGDVI), 40 to 60 (MPVIGAITGGLDFSNYFIGLS), and 81 to 101 (GSFLTVTLNFLIIAFVLFIVI).

It belongs to the MscL family. In terms of assembly, homopentamer.

Its subcellular location is the cell inner membrane. Its function is as follows. Channel that opens in response to stretch forces in the membrane lipid bilayer. May participate in the regulation of osmotic pressure changes within the cell. This Afipia carboxidovorans (strain ATCC 49405 / DSM 1227 / KCTC 32145 / OM5) (Oligotropha carboxidovorans) protein is Large-conductance mechanosensitive channel.